The sequence spans 350 residues: Serine/threonine-protein kinase SRK2F (350 aa).

The 257-residue stretch at tyrosine 4–phenylalanine 260 folds into the Protein kinase domain. ATP contacts are provided by residues leucine 10 to alanine 18 and lysine 33. Catalysis depends on aspartate 123, which acts as the Proton acceptor. Residues glutamate 270 to arginine 303 are a coiled coil.

It belongs to the protein kinase superfamily. Ser/Thr protein kinase family. As to expression, expressed in seedlings.

The enzyme catalyses L-seryl-[protein] + ATP = O-phospho-L-seryl-[protein] + ADP + H(+). It catalyses the reaction L-threonyl-[protein] + ATP = O-phospho-L-threonyl-[protein] + ADP + H(+). The sequence is that of Serine/threonine-protein kinase SRK2F (SRK2F) from Arabidopsis thaliana (Mouse-ear cress).